The primary structure comprises 445 residues: Phosphoglucosamine mutase (445 aa).

The Phosphoserine intermediate role is filled by Ser102. The Mg(2+) site is built by Ser102, Asp241, Asp243, and Asp245. Position 102 is a phosphoserine (Ser102).

The protein belongs to the phosphohexose mutase family. The cofactor is Mg(2+). Post-translationally, activated by phosphorylation.

The catalysed reaction is alpha-D-glucosamine 1-phosphate = D-glucosamine 6-phosphate. Its function is as follows. Catalyzes the conversion of glucosamine-6-phosphate to glucosamine-1-phosphate. The chain is Phosphoglucosamine mutase from Rhodococcus opacus (strain B4).